Reading from the N-terminus, the 45-residue chain is Large ribosomal subunit protein bL34 (45 aa).

Residues 1–27 (MTKRTLGGTSRKRKRVSGFRVRMRSHT) form a disordered region. Residues 10-27 (SRKRKRVSGFRVRMRSHT) are compositionally biased toward basic residues.

Belongs to the bacterial ribosomal protein bL34 family.

The polypeptide is Large ribosomal subunit protein bL34 (Synechococcus sp. (strain CC9902)).